A 209-amino-acid polypeptide reads, in one-letter code: V-type ATP synthase subunit D (209 aa).

Belongs to the V-ATPase D subunit family.

Functionally, produces ATP from ADP in the presence of a proton gradient across the membrane. The polypeptide is V-type ATP synthase subunit D (Anaeromyxobacter sp. (strain K)).